We begin with the raw amino-acid sequence, 85 residues long: Large ribosomal subunit protein bL31 (85 aa).

Positions 65-85 (YGMGGAGKAGEDKKAGDKADA) are disordered. Over residues 73–85 (AGEDKKAGDKADA) the composition is skewed to basic and acidic residues.

The protein belongs to the bacterial ribosomal protein bL31 family. Type A subfamily. As to quaternary structure, part of the 50S ribosomal subunit.

Binds the 23S rRNA. The protein is Large ribosomal subunit protein bL31 of Synechococcus sp. (strain WH7803).